The primary structure comprises 186 residues: Translation initiation factor IF-3 (186 aa).

This sequence belongs to the IF-3 family. In terms of assembly, monomer.

It is found in the cytoplasm. Its function is as follows. IF-3 binds to the 30S ribosomal subunit and shifts the equilibrium between 70S ribosomes and their 50S and 30S subunits in favor of the free subunits, thus enhancing the availability of 30S subunits on which protein synthesis initiation begins. This chain is Translation initiation factor IF-3, found in Chlamydia muridarum (strain MoPn / Nigg).